A 497-amino-acid polypeptide reads, in one-letter code: Probable cytosol aminopeptidase (497 aa).

2 residues coordinate Mn(2+): K267 and D272. K279 is a catalytic residue. Mn(2+) contacts are provided by D290, D349, and E351. Residue R353 is part of the active site.

Belongs to the peptidase M17 family. Mn(2+) serves as cofactor.

The protein localises to the cytoplasm. It carries out the reaction Release of an N-terminal amino acid, Xaa-|-Yaa-, in which Xaa is preferably Leu, but may be other amino acids including Pro although not Arg or Lys, and Yaa may be Pro. Amino acid amides and methyl esters are also readily hydrolyzed, but rates on arylamides are exceedingly low.. The catalysed reaction is Release of an N-terminal amino acid, preferentially leucine, but not glutamic or aspartic acids.. Presumably involved in the processing and regular turnover of intracellular proteins. Catalyzes the removal of unsubstituted N-terminal amino acids from various peptides. The chain is Probable cytosol aminopeptidase from Pseudomonas putida (strain GB-1).